The sequence spans 211 residues: Ribosomal RNA small subunit methyltransferase G (211 aa).

S-adenosyl-L-methionine-binding positions include Gly-75, Leu-80, Val-130–Glu-131, and Arg-145.

This sequence belongs to the methyltransferase superfamily. RNA methyltransferase RsmG family.

Its subcellular location is the cytoplasm. The enzyme catalyses guanosine(527) in 16S rRNA + S-adenosyl-L-methionine = N(7)-methylguanosine(527) in 16S rRNA + S-adenosyl-L-homocysteine. Specifically methylates the N7 position of guanine in position 527 of 16S rRNA. The chain is Ribosomal RNA small subunit methyltransferase G from Aromatoleum aromaticum (strain DSM 19018 / LMG 30748 / EbN1) (Azoarcus sp. (strain EbN1)).